Reading from the N-terminus, the 298-residue chain is DNA-3-methyladenine glycosylase (298 aa).

The N-terminal 17 residues, Met1–Arg17, are a transit peptide targeting the mitochondrion. The tract at residues Met1–Pro65 is disordered. Basic residues predominate over residues Lys9–Pro25. 2 positions are modified to phosphoserine: Ser78 and Ser252.

It belongs to the DNA glycosylase MPG family. As to quaternary structure, binds MBD1. Binds SSBP1.

The protein localises to the cytoplasm. It is found in the mitochondrion matrix. It localises to the mitochondrion nucleoid. The protein resides in the nucleus. The catalysed reaction is Hydrolysis of alkylated DNA, releasing 3-methyladenine, 3-methylguanine, 7-methylguanine and 7-methyladenine.. Its activity is regulated as follows. Binding to SSBP1 in mitochondria inhibits glycosylase activity in the context of a single-stranded DNA (ssDNA), but not a double-stranded DNA (dsDNA) substrates. Functionally, hydrolysis of the deoxyribose N-glycosidic bond to excise 3-methyladenine, and 7-methylguanine from the damaged DNA polymer formed by alkylation lesions. This chain is DNA-3-methyladenine glycosylase (MPG), found in Homo sapiens (Human).